Reading from the N-terminus, the 351-residue chain is Large ribosomal subunit protein uL3 (351 aa).

Disordered stretches follow at residues 1-31 (MGHR…TPRT) and 246-271 (KGSR…GQLG).

The protein belongs to the universal ribosomal protein uL3 family. In terms of assembly, part of the 50S ribosomal subunit. Forms a cluster with proteins L14 and L24e.

Functionally, one of the primary rRNA binding proteins, it binds directly near the 3'-end of the 23S rRNA, where it nucleates assembly of the 50S subunit. In Saccharolobus islandicus (strain Y.N.15.51 / Yellowstone #2) (Sulfolobus islandicus), this protein is Large ribosomal subunit protein uL3.